The sequence spans 169 residues: Probable NADH dehydrogenase [ubiquinone] 1 alpha subcomplex subunit 5, mitochondrial (169 aa).

The transit peptide at 1–11 (MFLRAIGRPLL) directs the protein to the mitochondrion.

This sequence belongs to the complex I NDUFA5 subunit family. In terms of assembly, complex I is composed of at least 49 different subunits.

It is found in the mitochondrion inner membrane. In terms of biological role, accessory subunit of the mitochondrial membrane respiratory chain NADH dehydrogenase (Complex I), that is believed not to be involved in catalysis. Complex I functions in the transfer of electrons from NADH to the respiratory chain. The immediate electron acceptor for the enzyme is believed to be ubiquinone. This is Probable NADH dehydrogenase [ubiquinone] 1 alpha subcomplex subunit 5, mitochondrial from Arabidopsis thaliana (Mouse-ear cress).